A 276-amino-acid polypeptide reads, in one-letter code: Foldase protein PrsA (276 aa).

A signal peptide spans 1–18 (MRKWMIVAAVAAVFGLSA). Residue Cys19 is the site of N-palmitoyl cysteine attachment. The S-diacylglycerol cysteine moiety is linked to residue Cys19. Positions 133-223 (KPKIRASHIL…YGYHIIKVTD (91 aa)) constitute a PpiC domain.

The protein belongs to the PrsA family.

It is found in the cell membrane. The enzyme catalyses [protein]-peptidylproline (omega=180) = [protein]-peptidylproline (omega=0). Plays a major role in protein secretion by helping the post-translocational extracellular folding of several secreted proteins. The chain is Foldase protein PrsA from Geobacillus sp. (strain WCH70).